We begin with the raw amino-acid sequence, 397 residues long: Nuclear pore complex-interacting protein family member B2 (397 aa).

The disordered stretch occupies residues 256–397 (NRMGHQPPPP…KLRTGHCTQA (142 aa)). The segment covering 267–277 (QQHSITDNSLS) has biased composition (polar residues). Low complexity predominate over residues 278 to 287 (LKTPPECLLT). A compositionally biased stretch (basic residues) spans 382-391 (KRRRLSKLRT).

The protein belongs to the NPIP family.

The protein resides in the nucleus. The sequence is that of Nuclear pore complex-interacting protein family member B2 from Homo sapiens (Human).